We begin with the raw amino-acid sequence, 511 residues long: uncharacterized protein (511 aa).

A CoA carboxyltransferase N-terminal domain is found at 2 to 254 (LMDYEKERTE…NFQEKAPIHE (253 aa)). The segment at 2-506 (LMDYEKERTE…KEMTFTNRKH (505 aa)) is carboxyltransferase. The 247-residue stretch at 260–506 (HFETPLADVI…KEMTFTNRKH (247 aa)) folds into the CoA carboxyltransferase C-terminal domain.

The protein belongs to the AccD/PCCB family.

This is an uncharacterized protein from Bacillus subtilis (strain 168).